A 159-amino-acid polypeptide reads, in one-letter code: 2-C-methyl-D-erythritol 2,4-cyclodiphosphate synthase (159 aa).

Aspartate 8 and histidine 10 together coordinate a divalent metal cation. Residues 8–10 and 34–35 contribute to the 4-CDP-2-C-methyl-D-erythritol 2-phosphate site; these read DVH and HS. Histidine 42 contributes to the a divalent metal cation binding site. Residues 56 to 58, 132 to 135, and arginine 142 contribute to the 4-CDP-2-C-methyl-D-erythritol 2-phosphate site; these read DIG and TTTE.

This sequence belongs to the IspF family. As to quaternary structure, homotrimer. The cofactor is a divalent metal cation.

The enzyme catalyses 4-CDP-2-C-methyl-D-erythritol 2-phosphate = 2-C-methyl-D-erythritol 2,4-cyclic diphosphate + CMP. It participates in isoprenoid biosynthesis; isopentenyl diphosphate biosynthesis via DXP pathway; isopentenyl diphosphate from 1-deoxy-D-xylulose 5-phosphate: step 4/6. Functionally, involved in the biosynthesis of isopentenyl diphosphate (IPP) and dimethylallyl diphosphate (DMAPP), two major building blocks of isoprenoid compounds. Catalyzes the conversion of 4-diphosphocytidyl-2-C-methyl-D-erythritol 2-phosphate (CDP-ME2P) to 2-C-methyl-D-erythritol 2,4-cyclodiphosphate (ME-CPP) with a corresponding release of cytidine 5-monophosphate (CMP). This Chlorobium phaeobacteroides (strain BS1) protein is 2-C-methyl-D-erythritol 2,4-cyclodiphosphate synthase.